We begin with the raw amino-acid sequence, 99 residues long: DNA-binding protein Fis (99 aa).

The segment at residues 75–94 (QTRAASIMGINRSTLRKKLK) is a DNA-binding region (H-T-H motif).

This sequence belongs to the transcriptional regulatory Fis family. Homodimer.

In terms of biological role, activates ribosomal RNA transcription. Plays a direct role in upstream activation of rRNA promoters. This is DNA-binding protein Fis from Buchnera aphidicola subsp. Schizaphis graminum (strain Sg).